The primary structure comprises 599 residues: Dachshund homolog 2 (599 aa).

Positions 69–155 (RMVDMHGMKV…LITRKDFETL (87 aa)) are DACHbox-N. Disordered stretches follow at residues 166–186 (RQMT…PKRS), 237–280 (LQGN…GPQH), and 370–409 (RIPE…MDHH). Over residues 237–262 (LQGNGSQNGTESEPDDLNSNTGGSES) the composition is skewed to polar residues. The span at 389-405 (SQTSSHTSSSVSSSPSQ) shows a compositional bias: low complexity. The DACHbox-C stretch occupies residues 453–533 (SSVETLLTNI…KTKRKLQEAL (81 aa)). A coiled-coil region spans residues 459–554 (LTNIQGLLKV…QALKQATTSD (96 aa)).

It belongs to the DACH/dachshund family. As to quaternary structure, interacts with SIX6 and EYA2.

The protein resides in the nucleus. In terms of biological role, transcription factor that is involved in regulation of organogenesis. Seems to be a regulator for SIX1 and SIX6. Seems to act as a corepressor of SIX6 in regulating proliferation by directly repressing cyclin-dependent kinase inhibitors, including the p27Kip1 promoter. Is recruited with SIX6 to the p27Kip1 promoter in embryonal retina. SIX6 corepression also seems to involve NCOR1, TBL1, HDAC1 and HDAC3. May be involved together with PAX3, SIX1, and EYA2 in regulation of myogenesis. In the developing somite, expression of DACH2 and PAX3 is regulated by the overlying ectoderm, and DACH2 and PAX3 positively regulate each other's expression. Probably binds to DNA via its DACHbox-N domain. In Homo sapiens (Human), this protein is Dachshund homolog 2 (DACH2).